The following is a 316-amino-acid chain: MNGIVNVLKPPGMSSHDVVDRIRRIFGVKKAGHTGTLDPGAAGVLVVCLGVATRLARFLLGEDKEYRVEITFGMSTSTGDSYGEITDQRDASFLKEHDIIRVLPEFTGEVRQVPPMTSAIKWRGKKLYELAREGLVVERQERAVYIKSLEFIRGSGWGTPSPRALMHLSCSKGTYVRSLCHDMGSRLGCGAHMSFLVRTRAGPFKIADSVTLEELQAAASKGVLERKIIEMDRAVSEYPEVIVKSSAVKAVAAGSKLYIPGVARMPLDLDCGKLVRLTGPDGLLAIAEAGREPFDKEKLFFKPVCVLARQAGRSSN.

D38 serves as the catalytic Nucleophile. The PUA domain occupies 238–312; sequence YPEVIVKSSA…PVCVLARQAG (75 aa).

The protein belongs to the pseudouridine synthase TruB family. Type 1 subfamily.

It catalyses the reaction uridine(55) in tRNA = pseudouridine(55) in tRNA. In terms of biological role, responsible for synthesis of pseudouridine from uracil-55 in the psi GC loop of transfer RNAs. This chain is tRNA pseudouridine synthase B, found in Pelotomaculum thermopropionicum (strain DSM 13744 / JCM 10971 / SI).